The following is a 412-amino-acid chain: POU domain, class 4, transcription factor 2 (412 aa).

The tract at residues 29-96 (LHSASPGSSA…SEAMRRACLP (68 aa)) is disordered. Residues 31–53 (SASPGSSAPAAPSASSPSSSSNA) show a composition bias toward low complexity. Gly residues-rich tracts occupy residues 54 to 70 (GSGG…GGGR) and 78 to 87 (GSGGGGGGGS). Residues 94–240 (CLPTPPSNIF…MHQAALSMAH (147 aa)) form a required for transcriptional activation region. The short motif at 113–122 (RAEALAAVDI) is the POU-IV box element. A disordered region spans residues 123–191 (VSQSKSHHHH…HHHHQPHQAL (69 aa)). Basic residues predominate over residues 127-138 (KSHHHHPPHHSP). Over residues 152 to 169 (PCTSAASSSSVPISHPSA) the composition is skewed to low complexity. Residues 173–187 (THHHHHHHHHHHHQP) are compositionally biased toward basic residues. The short motif at 174–188 (HHHHHHHHHHHHQPH) is the Nuclear speckle targeting signal element. Residues 241–412 (AHGLPSHMGC…QKRMKYSAGI (172 aa)) form a required for DNA-binding and transcriptional repression region. The region spanning 253–330 (DVDADPRDLE…ILQAWLEEAE (78 aa)) is the POU-specific domain. The homeobox DNA-binding region spans 348–407 (KKRKRTSIAAPEKRSLEAYFAIQPRPSSEKIAAIAEKLDLKKNVVRVWFCNQRQKQKRMK).

It belongs to the POU transcription factor family. Class-4 subfamily. As to quaternary structure, interacts with POU4F1; this interaction inhibits both POU4F1 DNA-binding and transcriptional activities. Interacts (C-terminus) with ESR1 (via DNA-binding domain); this interaction increases the estrogen receptor ESR1 transcriptional activity in a DNA- and ligand 17-beta-estradiol-independent manner. Interacts (via C-terminus) with TP53 (via N-terminus). Interacts with DLX1 (via homeobox DNA-binding domain); this interaction suppresses DLX1-mediated transcriptional activity in postnatal retina enhancing retinal ganglion cell (RGC) differentiation. Interacts with DLX2 (via homeobox DNA-binding domain); this interaction enhances RGC differentiation. Interacts (via C-terminus) with ISL1 (via C-terminus). Interacts with ISL2. Interacts with LHX2. As to expression, expressed in the heart, brain and spinal cord. Expressed in cardiomyocytes (at protein level). Expressed in brain and spinal cord. Expressed in dorsal root ganglion (RGD) neurons.

It is found in the nucleus. The protein resides in the nucleus speckle. The protein localises to the cytoplasm. Tissue-specific DNA-binding transcription factor involved in the development and differentiation of target cells. Functions either as activator or repressor modulating the rate of target gene transcription through RNA polymerase II enzyme in a promoter-dependent manner. Binds to the consensus octamer motif 5'-AT[A/T]A[T/A]T[A/T]A-3' of promoter of target genes. Plays a fundamental role in the gene regulatory network essential for retinal ganglion cell (RGC) differentiation. Binds to an octamer site to form a ternary complex with ISL1; cooperates positively with ISL1 and ISL2 to potentiate transcriptional activation of RGC target genes being involved in RGC fate commitment in the developing retina and RGC axon formation and pathfinding. Inhibits DLX1 and DLX2 transcriptional activities preventing DLX1- and DLX2-mediated ability to promote amacrine cell fate specification. In cooperation with TP53 potentiates transcriptional activation of BAX promoter activity increasing neuronal cell apoptosis. Negatively regulates BAX promoter activity in the absence of TP53. Acts as a transcriptional coactivator via its interaction with the transcription factor ESR1 by enhancing its effect on estrogen response element (ERE)-containing promoter. Antagonizes the transcriptional stimulatory activity of POU4F1 by preventing its binding to an octamer motif. Involved in TNFSF11-mediated terminal osteoclast differentiation. The sequence is that of POU domain, class 4, transcription factor 2 from Rattus norvegicus (Rat).